A 330-amino-acid chain; its full sequence is Aspartate--ammonia ligase (330 aa).

Belongs to the class-II aminoacyl-tRNA synthetase family. AsnA subfamily.

The protein localises to the cytoplasm. The enzyme catalyses L-aspartate + NH4(+) + ATP = L-asparagine + AMP + diphosphate + H(+). The protein operates within amino-acid biosynthesis; L-asparagine biosynthesis; L-asparagine from L-aspartate (ammonia route): step 1/1. The polypeptide is Aspartate--ammonia ligase (Yersinia enterocolitica serotype O:8 / biotype 1B (strain NCTC 13174 / 8081)).